Here is a 255-residue protein sequence, read N- to C-terminus: 3-oxoacyl-[acyl-carrier-protein] reductase MabA (255 aa).

Residues 32 to 35, R55, 69 to 70, G98, Y161, K165, I194, and R205 each bind NADP(+); these read NRGI and DV. The active-site Proton acceptor is the Y161.

The protein belongs to the short-chain dehydrogenases/reductases (SDR) family. Homotetramer.

The protein localises to the secreted. Its subcellular location is the cell wall. The catalysed reaction is a (3R)-hydroxyacyl-[ACP] + NADP(+) = a 3-oxoacyl-[ACP] + NADPH + H(+). It catalyses the reaction a (3R)-3-hydroxyacyl-CoA + NADP(+) = a 3-oxoacyl-CoA + NADPH + H(+). It carries out the reaction (3R)-3-hydroxybutanoyl-CoA + NADP(+) = acetoacetyl-CoA + NADPH + H(+). The enzyme catalyses (3R)-hydroxyoctanoyl-CoA + NADP(+) = 3-oxooctanoyl-CoA + NADPH + H(+). It participates in lipid metabolism; mycolic acid biosynthesis. Functionally, part of the mycobacterial fatty acid elongation system FAS-II, which is involved in mycolic acid biosynthesis. Catalyzes the NADPH-dependent reduction of beta-ketoacyl derivatives, the second step of the FAS-II elongation cycle. Has a preference for longer substrates. Can use CoA derivatives as substrates in vitro. The polypeptide is 3-oxoacyl-[acyl-carrier-protein] reductase MabA (Mycolicibacterium smegmatis (strain ATCC 700084 / mc(2)155) (Mycobacterium smegmatis)).